Here is a 791-residue protein sequence, read N- to C-terminus: RAS guanyl-releasing protein 1 (791 aa).

The 124-residue stretch at 49–172 (LGKLSKGASL…RLIDTAQINS (124 aa)) folds into the N-terminal Ras-GEF domain. The tract at residues 53-106 (SKGASLDELIQMCIQAFDLDGNMGQNNELLQIMLTMHGFLIPSTELLIKLRTLY) is ras exchanger motif region; required for transforming activity. The region spanning 201-432 (EPQELAEHLT…YELSYAREPR (232 aa)) is the Ras-GEF domain. 2 consecutive EF-hand domains span residues 466-501 (HVQR…FPFS) and 502-528 (FCVM…ASSI). The Ca(2+) site is built by Asp-479, Asp-481, Asp-483, Tyr-485, Glu-490, Asp-506, Asp-508, Glu-510, and Glu-517. Residues 537 to 587 (LHNFQETTYLRPTFCDNCAGFLWGVIKQGYRCKDCGMNCHKQCKELVVFEC) form a Phorbol-ester/DAG-type zinc finger. A disordered region spans residues 671–715 (TQTENETQSLCLQVPSPPRSRTPDLTSHLPISPMPSPCPSPVPTR). Residues 672 to 681 (QTENETQSLC) are compositionally biased toward polar residues. A compositionally biased stretch (pro residues) spans 702–712 (SPMPSPCPSPV). A coiled-coil region spans residues 728-783 (IRKARAELRGGKAGIQELEKEKVFLKEENTALKIQLKDAHRRVETLRAELRKYVLD).

This sequence belongs to the RASGRP family.

It is found in the cytoplasm. The protein resides in the cytosol. It localises to the cell membrane. Its subcellular location is the golgi apparatus membrane. The protein localises to the endoplasmic reticulum membrane. With respect to regulation, regulated by F-actin polymerization and probably by calcium. Its function is as follows. Functions as a diacylglycerol (DAG)-regulated nucleotide exchange factor specifically activating Ras through the exchange of bound GDP for GTP. The chain is RAS guanyl-releasing protein 1 (rasgrp1) from Xenopus laevis (African clawed frog).